Consider the following 106-residue polypeptide: Protein U4 (106 aa).

Residues 5-25 (FFISIILFVVLLNPSLIINMV) form a helical membrane-spanning segment.

The protein belongs to the nanovirus U4 protein family.

It is found in the membrane. This Cicer arietinum (Chickpea) protein is Protein U4 (DNA-U4).